A 358-amino-acid polypeptide reads, in one-letter code: Uroporphyrinogen decarboxylase (358 aa).

Substrate-binding positions include 29-33 (RQAGR), Asp79, Tyr156, Thr211, and His329.

Belongs to the uroporphyrinogen decarboxylase family. Homodimer.

The protein localises to the cytoplasm. It carries out the reaction uroporphyrinogen III + 4 H(+) = coproporphyrinogen III + 4 CO2. It functions in the pathway porphyrin-containing compound metabolism; protoporphyrin-IX biosynthesis; coproporphyrinogen-III from 5-aminolevulinate: step 4/4. Functionally, catalyzes the decarboxylation of four acetate groups of uroporphyrinogen-III to yield coproporphyrinogen-III. The sequence is that of Uroporphyrinogen decarboxylase from Idiomarina loihiensis (strain ATCC BAA-735 / DSM 15497 / L2-TR).